We begin with the raw amino-acid sequence, 538 residues long: Chaperonin GroEL (538 aa).

ATP-binding positions include 30–33, 87–91, Gly415, 479–481, and Asp495; these read TLGP, DGTTT, and DAA.

The protein belongs to the chaperonin (HSP60) family. Forms a cylinder of 14 subunits composed of two heptameric rings stacked back-to-back. Interacts with the co-chaperonin GroES.

It is found in the cytoplasm. It catalyses the reaction ATP + H2O + a folded polypeptide = ADP + phosphate + an unfolded polypeptide.. Functionally, together with its co-chaperonin GroES, plays an essential role in assisting protein folding. The GroEL-GroES system forms a nano-cage that allows encapsulation of the non-native substrate proteins and provides a physical environment optimized to promote and accelerate protein folding. The sequence is that of Chaperonin GroEL from Dictyoglomus thermophilum (strain ATCC 35947 / DSM 3960 / H-6-12).